The following is a 414-amino-acid chain: Glucose-1-phosphate adenylyltransferase (414 aa).

Alpha-D-glucose 1-phosphate contacts are provided by residues Y103, G168, 183-184, and S201; that span reads EK.

Belongs to the bacterial/plant glucose-1-phosphate adenylyltransferase family. Homotetramer.

The catalysed reaction is alpha-D-glucose 1-phosphate + ATP + H(+) = ADP-alpha-D-glucose + diphosphate. It participates in glycan biosynthesis; glycogen biosynthesis. Its function is as follows. Involved in the biosynthesis of ADP-glucose, a building block required for the elongation reactions to produce glycogen. Catalyzes the reaction between ATP and alpha-D-glucose 1-phosphate (G1P) to produce pyrophosphate and ADP-Glc. In Thermus thermophilus (strain ATCC 27634 / DSM 579 / HB8), this protein is Glucose-1-phosphate adenylyltransferase.